Here is a 148-residue protein sequence, read N- to C-terminus: Cytochrome c-type biogenesis protein CcmE (148 aa).

The Cytoplasmic portion of the chain corresponds to 1 to 7 (MTRKQRR). The helical; Signal-anchor for type II membrane protein transmembrane segment at 8-28 (LYFVLLGMAALGGAVALVLTA) threads the bilayer. Residues 29–148 (ISDSLVYFYS…QWNDGKQPKQ (120 aa)) are Periplasmic-facing. Positions 121 and 125 each coordinate heme.

It belongs to the CcmE/CycJ family.

The protein resides in the cell inner membrane. Its function is as follows. Heme chaperone required for the biogenesis of c-type cytochromes. Transiently binds heme delivered by CcmC and transfers the heme to apo-cytochromes in a process facilitated by CcmF and CcmH. This chain is Cytochrome c-type biogenesis protein CcmE, found in Paramagnetospirillum magneticum (strain ATCC 700264 / AMB-1) (Magnetospirillum magneticum).